Reading from the N-terminus, the 496-residue chain is Angiopoietin-2 (496 aa).

The first 18 residues, 1-18 (MWQIVFLTFGCDLVLASA), serve as a signal peptide directing secretion. N-linked (GlcNAc...) asparagine glycans are attached at residues asparagine 89, asparagine 119, asparagine 133, asparagine 151, asparagine 240, and asparagine 304. Residues 159–256 (QLLQHSISTN…QQHDLMETVN (98 aa)) adopt a coiled-coil conformation. A Fibrinogen C-terminal domain is found at 280–496 (TFRDCAEIFK…TTMMIRPADF (217 aa)). A disulfide bond links cysteine 284 and cysteine 313. Aspartate 429, aspartate 431, cysteine 433, and cysteine 435 together coordinate Ca(2+). Cystine bridges form between cysteine 433/cysteine 435 and cysteine 437/cysteine 450.

Interacts with TEK/TIE2, competing for the same binding site as ANGPT1. Interacts with ITGA5. Interacts with SVEP1/polydom. Interacts with THBD; this interaction significantly inhibits the generation of activated PC and TAFIa/CPB2 by the thrombin/thrombomodulin complex.

Its subcellular location is the secreted. Its function is as follows. Binds to TEK/TIE2, competing for the ANGPT1 binding site, and modulating ANGPT1 signaling. Can induce tyrosine phosphorylation of TEK/TIE2 in the absence of ANGPT1. In the absence of angiogenic inducers, such as VEGF, ANGPT2-mediated loosening of cell-matrix contacts may induce endothelial cell apoptosis with consequent vascular regression. In concert with VEGF, it may facilitate endothelial cell migration and proliferation, thus serving as a permissive angiogenic signal. Involved in the regulation of lymphangiogenesis. The chain is Angiopoietin-2 (Angpt2) from Rattus norvegicus (Rat).